A 177-amino-acid polypeptide reads, in one-letter code: Large ribosomal subunit protein uL6 (177 aa).

This sequence belongs to the universal ribosomal protein uL6 family. Part of the 50S ribosomal subunit.

Functionally, this protein binds to the 23S rRNA, and is important in its secondary structure. It is located near the subunit interface in the base of the L7/L12 stalk, and near the tRNA binding site of the peptidyltransferase center. The sequence is that of Large ribosomal subunit protein uL6 from Agrobacterium fabrum (strain C58 / ATCC 33970) (Agrobacterium tumefaciens (strain C58)).